The sequence spans 186 residues: T-cell receptor-associated transmembrane adapter 1 (186 aa).

Residues 1-7 (MSGISGC) lie on the Extracellular side of the membrane. The chain crosses the membrane as a helical; Signal-anchor for type III membrane protein span at residues 8 to 28 (PFFLWGLLALLGLALVISLIF). Residues 29 to 186 (NISHYVEKQR…LIRAKREPIN (158 aa)) lie on the Cytoplasmic side of the membrane. Position 46 is a phosphoserine (Ser46). Position 79 is a phosphotyrosine (Tyr79). The tract at residues 79 to 82 (YEQM) is interaction with PIK3R1. Residues 116 to 140 (SVKGKRRKPRKQNTHFSDKDGDEQL) are disordered. Over residues 118 to 128 (KGKRRKPRKQN) the composition is skewed to basic residues. Residues 131–140 (FSDKDGDEQL) show a composition bias toward basic and acidic residues.

Homodimer; disulfide-linked. Interacts with CD3Z. When phosphorylated, interacts with PIK3R1. In terms of processing, phosphorylated on tyrosines by LCK or FYN upon TCR activation. In terms of tissue distribution, strongly expressed in thymus, and to a lesser extent in spleen, lymph node and peripheral blood lymphocytes. Present in T-cells and NK cells, but not B-cells (at protein level).

The protein resides in the cell membrane. Its function is as follows. Stabilizes the TCR (T-cell antigen receptor)/CD3 complex at the surface of T-cells. The polypeptide is T-cell receptor-associated transmembrane adapter 1 (TRAT1) (Homo sapiens (Human)).